Reading from the N-terminus, the 355-residue chain is Aromatic amino acid aminotransferase (355 aa).

K217 is subject to N6-(pyridoxal phosphate)lysine.

Belongs to the class-II pyridoxal-phosphate-dependent aminotransferase family. Homodimer. Pyridoxal 5'-phosphate serves as cofactor.

The catalysed reaction is an aromatic L-alpha-amino acid + 2-oxoglutarate = an aromatic oxo-acid + L-glutamate. Functionally, aminotransferase that catalyzes the conversion of aromatic amino acids and 2-oxoglutarate into corresponding aromatic oxo acids and L-glutamate. The protein is Aromatic amino acid aminotransferase of Mycolicibacterium paratuberculosis (strain ATCC BAA-968 / K-10) (Mycobacterium paratuberculosis).